The chain runs to 384 residues: 8-amino-7-oxononanoate synthase (384 aa).

Residue R21 participates in substrate binding. 108–109 (GF) is a binding site for pyridoxal 5'-phosphate. Residue H133 coordinates substrate. 3 residues coordinate pyridoxal 5'-phosphate: S179, H207, and T233. K236 carries the post-translational modification N6-(pyridoxal phosphate)lysine. T352 provides a ligand contact to substrate.

The protein belongs to the class-II pyridoxal-phosphate-dependent aminotransferase family. BioF subfamily. As to quaternary structure, homodimer. Pyridoxal 5'-phosphate serves as cofactor.

The enzyme catalyses 6-carboxyhexanoyl-[ACP] + L-alanine + H(+) = (8S)-8-amino-7-oxononanoate + holo-[ACP] + CO2. The protein operates within cofactor biosynthesis; biotin biosynthesis. In terms of biological role, catalyzes the decarboxylative condensation of pimeloyl-[acyl-carrier protein] and L-alanine to produce 8-amino-7-oxononanoate (AON), [acyl-carrier protein], and carbon dioxide. The chain is 8-amino-7-oxononanoate synthase from Escherichia fergusonii (strain ATCC 35469 / DSM 13698 / CCUG 18766 / IAM 14443 / JCM 21226 / LMG 7866 / NBRC 102419 / NCTC 12128 / CDC 0568-73).